The primary structure comprises 293 residues: Foldase protein PrsA 2 (293 aa).

Positions 1 to 20 (MKKKLILGLVMMMALFSLAA) are cleaved as a signal peptide. Cysteine 21 carries N-palmitoyl cysteine lipidation. Cysteine 21 carries the S-diacylglycerol cysteine lipid modification. The PpiC domain occupies 135–226 (QPDITVSHIL…YGYHIIQMDK (92 aa)).

It belongs to the PrsA family.

Its subcellular location is the cell membrane. The enzyme catalyses [protein]-peptidylproline (omega=180) = [protein]-peptidylproline (omega=0). Its function is as follows. Plays a major role in protein secretion by helping the post-translocational extracellular folding of several secreted proteins. This Listeria monocytogenes serovar 1/2a (strain ATCC BAA-679 / EGD-e) protein is Foldase protein PrsA 2 (prsA2).